The following is a 974-amino-acid chain: UvrABC system protein A (974 aa).

Residue 34 to 41 (GLSGSGKS) coordinates ATP. ABC transporter domains follow at residues 331-610 (WARS…TNSL) and 630-959 (ISKT…QFLK). ATP is bound at residue 663–670 (GVSGGGKS). The C4-type zinc finger occupies 762–788 (CEACQGDGVIKIEMHFLPDVYVTCDVC).

The protein belongs to the ABC transporter superfamily. UvrA family. In terms of assembly, forms a heterotetramer with UvrB during the search for lesions.

It is found in the cytoplasm. Functionally, the UvrABC repair system catalyzes the recognition and processing of DNA lesions. UvrA is an ATPase and a DNA-binding protein. A damage recognition complex composed of 2 UvrA and 2 UvrB subunits scans DNA for abnormalities. When the presence of a lesion has been verified by UvrB, the UvrA molecules dissociate. The protein is UvrABC system protein A of Brucella abortus (strain 2308).